The primary structure comprises 242 residues: ATP synthase subunit a (242 aa).

A run of 6 helical transmembrane segments spans residues 29-49, 84-104, 114-134, 140-160, 189-209, and 210-230; these read SAAY…LAFS, FVPV…FGMI, IIIT…VGFV, FLSL…MIII, VIAS…IPLM, and VILI…FTIL.

It belongs to the ATPase A chain family. As to quaternary structure, F-type ATPases have 2 components, CF(1) - the catalytic core - and CF(0) - the membrane proton channel. CF(1) has five subunits: alpha(3), beta(3), gamma(1), delta(1), epsilon(1). CF(0) has three main subunits: a(1), b(2) and c(9-12). The alpha and beta chains form an alternating ring which encloses part of the gamma chain. CF(1) is attached to CF(0) by a central stalk formed by the gamma and epsilon chains, while a peripheral stalk is formed by the delta and b chains.

It is found in the cell inner membrane. In terms of biological role, key component of the proton channel; it plays a direct role in the translocation of protons across the membrane. The chain is ATP synthase subunit a from Rickettsia bellii (strain RML369-C).